The primary structure comprises 37 residues: Large ribosomal subunit protein bL36c (37 aa).

The protein belongs to the bacterial ribosomal protein bL36 family.

Its subcellular location is the plastid. The protein resides in the chloroplast. In Chara vulgaris (Common stonewort), this protein is Large ribosomal subunit protein bL36c.